The sequence spans 284 residues: Acetylglutamate kinase (284 aa).

Residues G66–G67, R88, and N179 contribute to the substrate site.

The protein belongs to the acetylglutamate kinase family. ArgB subfamily.

It localises to the cytoplasm. The catalysed reaction is N-acetyl-L-glutamate + ATP = N-acetyl-L-glutamyl 5-phosphate + ADP. The protein operates within amino-acid biosynthesis; L-arginine biosynthesis; N(2)-acetyl-L-ornithine from L-glutamate: step 2/4. Catalyzes the ATP-dependent phosphorylation of N-acetyl-L-glutamate. The protein is Acetylglutamate kinase of Actinobacillus pleuropneumoniae serotype 3 (strain JL03).